The primary structure comprises 851 residues: Transcriptional regulator RFX1 (851 aa).

Composition is skewed to polar residues over residues 1 to 11 (MSSDQTPQNRN) and 20 to 34 (PRLQQQTSQIPSTGP). 3 disordered regions span residues 1 to 121 (MSSD…EPHP), 134 to 170 (QSQFQFDYSSPYIGQSQSQSQSQSQAQPQPHPQPQTY), and 195 to 230 (HEASSADNDSATNITTPQKRKKQKRSESVTPNTGEN). Residues 38–53 (QQRERSQEQESDHEHQ) show a composition bias toward basic and acidic residues. Positions 54–84 (QAQQHLHQFQQSNLTPSTTAFPSSTSIPTFS) are enriched in low complexity. Residues 85 to 114 (KQDQGYHNQFSSPQSSYRKIGNFAQSSNAP) are compositionally biased toward polar residues. Positions 141–170 (YSSPYIGQSQSQSQSQSQAQPQPHPQPQTY) are enriched in low complexity. Positions 199-211 (SADNDSATNITTP) are enriched in polar residues. A DNA-binding region (RFX-type winged-helix) is located at residues 282-357 (GMVWLLNSCD…YHYCGIKLTG (76 aa)). Disordered regions lie at residues 368 to 411 (YQQK…SVSY) and 783 to 806 (PPSLSSLPQTQQQNPVIQEETGTQ). Over residues 384–393 (AQVGSSTSSA) the composition is skewed to polar residues. Positions 783–797 (PPSLSSLPQTQQQNP) are enriched in low complexity.

It belongs to the RFX family.

The protein resides in the nucleus. Functionally, transcription factor involved in DNA damage responses, morphogenesis, and virulence. The protein is Transcriptional regulator RFX1 (RFX1) of Candida albicans (strain SC5314 / ATCC MYA-2876) (Yeast).